Reading from the N-terminus, the 488-residue chain is Cysteine desulfurase, mitochondrial (488 aa).

The disordered stretch occupies residues Leu-25–His-52. The segment covering Ala-30–Lys-47 has biased composition (polar residues). Residues Ala-157–Thr-158, Asn-237, Gln-265, and Ser-285–His-287 each bind pyridoxal 5'-phosphate. N6-(pyridoxal phosphate)lysine is present on Lys-288. Thr-325 is a pyridoxal 5'-phosphate binding site. The Cysteine persulfide intermediate role is filled by Cys-412. Cys-412 serves as a coordination point for [2Fe-2S] cluster.

Belongs to the class-V pyridoxal-phosphate-dependent aminotransferase family. NifS/IscS subfamily. Pyridoxal 5'-phosphate is required as a cofactor.

Its subcellular location is the mitochondrion. It catalyses the reaction (sulfur carrier)-H + L-cysteine = (sulfur carrier)-SH + L-alanine. Functionally, catalyzes the removal of elemental sulfur from cysteine to produce alanine. It supplies the inorganic sulfur for iron-sulfur (Fe-S) clusters. Plays a role in both tRNA-processing and mitochondrial metabolism. Involved in the 2-thio-modification of both 5-carboxymethylaminomethyl-2-thiouridine in mitochondrial tRNAs and 5-methoxycarbonylmethyl-2-thiouridine (mcm5s2U) in cytoplasmic tRNAs. In Candida albicans (strain SC5314 / ATCC MYA-2876) (Yeast), this protein is Cysteine desulfurase, mitochondrial (NFS1).